Reading from the N-terminus, the 790-residue chain is Transient receptor potential cation channel subfamily V member 3 (790 aa).

At 1 to 430 (MKAHPKEMVP…TLEPLHTLLH (430 aa)) the chain is on the cytoplasmic side. Disordered regions lie at residues 15–34 (RVAA…PAEI), 52–71 (PNPT…MDSN), and 76–112 (ISGN…KEEQ). A compositionally biased stretch (polar residues) spans 95 to 105 (ETPSNPNSPSA). ANK repeat units lie at residues 117–148 (RRLK…LCRR), 170–198 (TCLM…EEND), 214–243 (EGQT…DVNA), 261–291 (FGET…DITS), 298–330 (NILH…RSGN), 340–362 (DGLT…YILS), and 398–420 (TTDN…HEML). A helical transmembrane segment spans residues 431-460 (MKWKKFAKHMFFLSFCFYFFYNITLTLVSY). The Extracellular segment spans residues 461-479 (YRPREEEAIPHPLALTHKM). The chain crosses the membrane as a helical span at residues 480–508 (GWLQLLGRMFVLIWAMCISVKEGIAIFLL). The Cytoplasmic segment spans residues 509 to 519 (RPSDLQSILSD). A helical membrane pass occupies residues 520–540 (AWFHFVFFIQAVLVILSVFLY). At 541 to 545 (LFAYK) the chain is on the extracellular side. The chain crosses the membrane as a helical span at residues 546–566 (EYLACLVLAMALGWANMLYYT). At 567-569 (RGF) the chain is on the cytoplasmic side. The chain crosses the membrane as a helical span at residues 570-608 (QSMGMYSVMIQKVILHDVLKFLFVYIVFLLGFGVALASL). At 609–620 (IEKCPKDNKDCS) the chain is on the extracellular side. An intramembrane region (pore-forming) is located at residues 621–646 (SYGSFSDAVLELFKLTIGLGDLNIQQ). A Na(+)-binding site is contributed by Gly-638. Residues 647–649 (NSK) are Extracellular-facing. The chain crosses the membrane as a helical span at residues 650–686 (YPILFLFLLITYVILTFVLLLNMLIALMGETVENVSK). Topologically, residues 687–790 (ESERIWRLQR…EVEEFPETSV (104 aa)) are cytoplasmic.

Belongs to the transient receptor (TC 1.A.4) family. TrpV subfamily. TRPV3 sub-subfamily. As to quaternary structure, homotetramer. May convert from a homotetramer to a homopentamer to allow pore dilation. Interacts with TRPV1; may form a heteromeric channel with TRPV1. Interacts with SNX11; this interaction promotes TRPV3 trafficking from the cell membrane to lysosome for degradation. Abundantly expressed in CNS. Widely expressed at low levels. Detected in dorsal root ganglion (at protein level). Expressed in the keratinocyte layers of the outer root sheath and, to lesser extent, to the matrix of the hair follicles (at protein level).

It localises to the cell membrane. It is found in the cytoplasm. The protein resides in the lysosome. It catalyses the reaction Ca(2+)(in) = Ca(2+)(out). The catalysed reaction is Mg(2+)(in) = Mg(2+)(out). It carries out the reaction Na(+)(in) = Na(+)(out). The enzyme catalyses K(+)(in) = K(+)(out). With respect to regulation, activated by cannabinoid that binds to the vanilloid binding pocket. Diphenylboronic anhydride induces pore dilation and enhances cation permeability by promoting the conversion to a homopentamer. Non-selective calcium permeant cation channel. It is activated by innocuous (warm) temperatures and shows an increased response at noxious temperatures greater than 39 degrees Celsius. Activation exhibits an outward rectification. The channel pore can dilate to provide permeability to larger cations. May associate with TRPV1 and may modulate its activity. Is a negative regulator of hair growth and cycling: TRPV3-coupled signaling suppresses keratinocyte proliferation in hair follicles and induces apoptosis and premature hair follicle regression (catagen). This chain is Transient receptor potential cation channel subfamily V member 3 (TRPV3), found in Homo sapiens (Human).